The chain runs to 253 residues: DNA repair protein RecO (253 aa).

The protein belongs to the RecO family.

Involved in DNA repair and RecF pathway recombination. This is DNA repair protein RecO from Dehalococcoides mccartyi (strain CBDB1).